A 78-amino-acid polypeptide reads, in one-letter code: Small ribosomal subunit protein bS16 (78 aa).

It belongs to the bacterial ribosomal protein bS16 family.

This Thermodesulfovibrio yellowstonii (strain ATCC 51303 / DSM 11347 / YP87) protein is Small ribosomal subunit protein bS16.